A 294-amino-acid chain; its full sequence is Nucleotide-binding protein Maqu_2718 (294 aa).

Residue 8–15 (GRSGSGKS) coordinates ATP. Position 61–64 (61–64 (DARN)) interacts with GTP.

The protein belongs to the RapZ-like family.

Functionally, displays ATPase and GTPase activities. This chain is Nucleotide-binding protein Maqu_2718, found in Marinobacter nauticus (strain ATCC 700491 / DSM 11845 / VT8) (Marinobacter aquaeolei).